We begin with the raw amino-acid sequence, 621 residues long: MEIPIAEELAKKQKSISVAEFFEKNRQILGFDSAPRSLITTVKEAVDNSLDACEEAGILPDILVQVERTGQDYVTVIIEDNGPGIVREQIPKVFAKLLYGSRFHALKQSRGQQGIGISAAVLYAQMTAGRHTKILSKTGSNVPAHYYELMINTSTNEPDILMDEVRDWFRPHGTQIELEMKAAYVKGRRQSIYEYLKATAIVNPHARITLIDPDGNEEVFERATDKIPDPAEEILPHPEGIELGTLMKMLHYTERQKLAPFLRYSFCKIGLLTADEICKAAGLDPEIDPHALGRHEARKLIEAFQKVKIMSPPTDCLSPIGEELIYRGLEKETNVDFIATSTRKPAVYSGNPFVVEVGLAYGGNLPKEEKISIMRFANRVPLLYQQGGCVTTHAVEDIRWKQYGLNQPGGGVPIGPVLLLIHVASINVPFTSESKDAIADIPVIKEEVDLAVKEVARKLKHYLSKQSNLKKRREKEIIITKVLPKMAVKVANILEKDVPDINPVVAKIMGNLLVYRKVKSNGDGTADVAIKVKNFGTSAHSFRVHEMLPCKINGAKPEPKVVTMDNDYDYVWDVSAAAGSSKVLSYKIESATVEELRKLPQLIVEGIEEELVTGAKAFRGV.

Residues N48, D80, 101 to 102 (SR), 111 to 118 (GQQGIGIS), and K435 contribute to the ATP site.

Belongs to the TOP6B family. In terms of assembly, homodimer. Heterotetramer of two Top6A and two Top6B chains.

The enzyme catalyses ATP-dependent breakage, passage and rejoining of double-stranded DNA.. In terms of biological role, relaxes both positive and negative superturns and exhibits a strong decatenase activity. This chain is Type 2 DNA topoisomerase 6 subunit B, found in Methanosarcina acetivorans (strain ATCC 35395 / DSM 2834 / JCM 12185 / C2A).